The sequence spans 310 residues: Acetyl-coenzyme A carboxylase carboxyl transferase subunit beta (310 aa).

The CoA carboxyltransferase N-terminal domain maps to 27–296 (LWKKCPKCSA…PEFENEEELE (270 aa)). 4 residues coordinate Zn(2+): cysteine 31, cysteine 34, cysteine 50, and cysteine 53. A C4-type zinc finger spans residues 31-53 (CPKCSAVLYRPELEKNLDVCPKC). The disordered stretch occupies residues 285–310 (PEPEFENEEELEEEEMERPEPPDNVE). Acidic residues predominate over residues 287 to 310 (PEFENEEELEEEEMERPEPPDNVE).

The protein belongs to the AccD/PCCB family. In terms of assembly, acetyl-CoA carboxylase is a heterohexamer composed of biotin carboxyl carrier protein (AccB), biotin carboxylase (AccC) and two subunits each of ACCase subunit alpha (AccA) and ACCase subunit beta (AccD). The cofactor is Zn(2+).

The protein localises to the cytoplasm. The enzyme catalyses N(6)-carboxybiotinyl-L-lysyl-[protein] + acetyl-CoA = N(6)-biotinyl-L-lysyl-[protein] + malonyl-CoA. It functions in the pathway lipid metabolism; malonyl-CoA biosynthesis; malonyl-CoA from acetyl-CoA: step 1/1. Component of the acetyl coenzyme A carboxylase (ACC) complex. Biotin carboxylase (BC) catalyzes the carboxylation of biotin on its carrier protein (BCCP) and then the CO(2) group is transferred by the transcarboxylase to acetyl-CoA to form malonyl-CoA. The chain is Acetyl-coenzyme A carboxylase carboxyl transferase subunit beta from Hahella chejuensis (strain KCTC 2396).